The sequence spans 57 residues: uncharacterized protein (57 aa).

A helical membrane pass occupies residues 15 to 37 (GLAGLICIGLTISSGFSGSSILI).

It localises to the membrane. This is an uncharacterized protein from Dictyostelium discoideum (Social amoeba).